The chain runs to 408 residues: 3-hydroxy-3-methylglutaryl-coenzyme A reductase (408 aa).

Catalysis depends on charge relay system residues glutamate 101 and aspartate 307. The active-site Proton donor is histidine 403.

The protein belongs to the HMG-CoA reductase family.

It carries out the reaction (R)-mevalonate + 2 NADP(+) + CoA = (3S)-3-hydroxy-3-methylglutaryl-CoA + 2 NADPH + 2 H(+). It functions in the pathway metabolic intermediate biosynthesis; (R)-mevalonate biosynthesis; (R)-mevalonate from acetyl-CoA: step 3/3. In terms of biological role, converts HMG-CoA to mevalonate. The chain is 3-hydroxy-3-methylglutaryl-coenzyme A reductase (hmgA) from Pyrococcus abyssi (strain GE5 / Orsay).